The chain runs to 463 residues: MATDGMVLHKRSLSEGGTSTQAWKVLSQTLPSRGPDVDAWWQLTGRHLAVLLDAAAYPIEKQYECLLYHYHYAAPYLGPAPREGASPPTWKSMLQLDGTPFEFSWKWNNPGGEPDVRFGLEPIGPMAGTSLDPLNHLAMREILYKLSSAVPGSDLTWTHHFLATLFDHDYAKYTQKAATMGSSIGTSLVYSLEFQRKSTGLKTYFHPRKLDQQAFLDIPSWEASFRGLHPNSPSRTAVHEFLSTNPEGKLLKPFCLSVDNCSPAKARIKWYFNSPHTNFRAIREIMTLGGRIADTETRTKQFSELFNLLKTVTEEHADFPETSEFPYVPNNGDSIIPNFADAPDMLKGCVYFFDIAPGRNLPAIKVYFPVRNHCRNDLAVTQNLNRWLESRGRGQYGAAFGRALETIADYRRLEDSGGLLSFLSCQFMEDGELDLTSYFNPQAFHSGRLTHRRATRRRGDDRW.

This sequence belongs to the tryptophan dimethylallyltransferase family.

The protein operates within secondary metabolite biosynthesis. With respect to regulation, mn(2+) and Co(2+) strongly enhance prenylation activity. Dehydrogenase involved in the conversion of monodictyphenone to the prenyl xanthones such as emericellin, shamixanthone and epishamixanthone. Monodictyphenone is first converted to variecoxanthone A via a paeciloxanthone intermediate by the consecutive actions of the FAD-dependent monooxygenase mdpD and the xanthone prenyltransferase xptB. XptB catalyzes regular O-prenylation at the hydroxy group of C-7 of the xanthone ring. Variecoxanthone A is further prenylated to emericellin by xptA before being reduced to shamixanthone and epishamixanthone by the dehydrogenase xptC. This Emericella nidulans (strain FGSC A4 / ATCC 38163 / CBS 112.46 / NRRL 194 / M139) (Aspergillus nidulans) protein is Xanthone prenyltransferase B.